A 101-amino-acid chain; its full sequence is Small ribosomal subunit protein bS18c (101 aa).

This sequence belongs to the bacterial ribosomal protein bS18 family. In terms of assembly, part of the 30S ribosomal subunit.

It localises to the plastid. The protein localises to the chloroplast. The sequence is that of Small ribosomal subunit protein bS18c from Panax ginseng (Korean ginseng).